A 474-amino-acid polypeptide reads, in one-letter code: tRNA-2-methylthio-N(6)-dimethylallyladenosine synthase (474 aa).

In terms of domain architecture, MTTase N-terminal spans 3–120 (KKLHIKTWGC…LPEMINHVQG (118 aa)). 6 residues coordinate [4Fe-4S] cluster: Cys-12, Cys-49, Cys-83, Cys-157, Cys-161, and Cys-164. The Radical SAM core domain maps to 143 to 375 (RAEGPTAFVS…QQRISQQAME (233 aa)). The 64-residue stretch at 378 to 441 (RKMVGTVQRV…ASSLRGILLR (64 aa)) folds into the TRAM domain.

Belongs to the methylthiotransferase family. MiaB subfamily. Monomer. [4Fe-4S] cluster is required as a cofactor.

It is found in the cytoplasm. It carries out the reaction N(6)-dimethylallyladenosine(37) in tRNA + (sulfur carrier)-SH + AH2 + 2 S-adenosyl-L-methionine = 2-methylsulfanyl-N(6)-dimethylallyladenosine(37) in tRNA + (sulfur carrier)-H + 5'-deoxyadenosine + L-methionine + A + S-adenosyl-L-homocysteine + 2 H(+). Functionally, catalyzes the methylthiolation of N6-(dimethylallyl)adenosine (i(6)A), leading to the formation of 2-methylthio-N6-(dimethylallyl)adenosine (ms(2)i(6)A) at position 37 in tRNAs that read codons beginning with uridine. This chain is tRNA-2-methylthio-N(6)-dimethylallyladenosine synthase, found in Yersinia pestis bv. Antiqua (strain Antiqua).